The primary structure comprises 3722 residues: Vitelline envelope sperm lysin receptor (3722 aa).

The first 24 residues, 1 to 24 (MSGMQWSFGFSCLFFLKTVWICQA), serve as a signal peptide directing secretion. Over 25–3698 (FDADTPDPRV…TPSTDMATVQ (3674 aa)) the chain is Extracellular. Intrachain disulfides connect Cys-43–Cys-141 and Cys-72–Cys-104. The VERL 1 repeat unit spans residues 77 to 155 (MQMTRGRGIN…SQASNAPEPK (79 aa)). N-linked (GlcNAc...) asparagine glycans are attached at residues Asn-115, Asn-122, and Asn-142. The tract at residues 146–169 (SQASNAPEPKASPTSSTPQPEAAS) is disordered. Over residues 157-169 (SPTSSTPQPEAAS) the composition is skewed to polar residues. Residue Asn-171 is glycosylated (N-linked (GlcNAc...) asparagine). Disulfide bonds link Cys-182–Cys-280 and Cys-211–Cys-243. The VERL 2 repeat unit spans residues 216 to 293 (VPITHEHGFN…KSPDAPKPES (78 aa)). N-linked (GlcNAc...) asparagine glycosylation occurs at Asn-254. The interval 279–335 (QCYMPKSPDAPKPESCLSSPPEPEASPSSNAPEPETYPTSSAPEKVSSDQPAPSHNQ) is disordered. Positions 291 to 312 (PESCLSSPPEPEASPSSNAPEP) are enriched in low complexity. The span at 315–335 (YPTSSAPEKVSSDQPAPSHNQ) shows a compositional bias: polar residues. Residues Asn-334 and Asn-373 are each glycosylated (N-linked (GlcNAc...) asparagine). 2 disulfides stabilise this stretch: Cys-345–Cys-443 and Cys-374–Cys-406. The stretch at 379–455 (VPITQEFGIN…PKSPVAPKPE (77 aa)) is one VERL 3 repeat. N-linked (GlcNAc...) asparagine glycans are attached at residues Asn-417, Asn-438, Asn-487, Asn-501, Asn-526, Asn-570, Asn-591, Asn-640, Asn-654, Asn-679, Asn-723, Asn-744, Asn-793, Asn-807, Asn-832, Asn-876, Asn-897, Asn-946, Asn-960, Asn-985, Asn-1029, Asn-1050, Asn-1099, Asn-1113, Asn-1138, Asn-1182, Asn-1203, Asn-1252, Asn-1266, Asn-1291, Asn-1335, Asn-1356, Asn-1405, Asn-1419, Asn-1443, and Asn-1487. The disordered stretch occupies residues 443-488 (CYMPKSPVAPKPETGPTSNAPEPETYPTSSAPEKVSSDQPAPSHNQ). A compositionally biased stretch (polar residues) spans 457–488 (GPTSNAPEPETYPTSSAPEKVSSDQPAPSHNQ). Residues 532–608 (VPITQEFGIN…PKSPVAPKPE (77 aa)) form a VERL 4 repeat. The tract at residues 603 to 641 (VAPKPETGPTSNAPEPETYPTSSAPEKVSSDQPAPSHNQ) is disordered. Positions 610-641 (GPTSNAPEPETYPTSSAPEKVSSDQPAPSHNQ) are enriched in polar residues. Residues 685–761 (VPITQEFGIN…PKSPVAPKPE (77 aa)) form a VERL 5 repeat. The disordered stretch occupies residues 756–794 (VAPKPETGPSSNAPEPETYPTSSAPEKVSSDQPAPSHNQ). The segment covering 763–794 (GPSSNAPEPETYPTSSAPEKVSSDQPAPSHNQ) has biased composition (polar residues). The VERL 6 repeat unit spans residues 838-914 (VPITQEFGIN…PKSPVAPKPE (77 aa)). A disordered region spans residues 909–947 (VAPKPETGPTSNAPEPETYPTSSAPEKVSSDQPAPSHNQ). Positions 916–947 (GPTSNAPEPETYPTSSAPEKVSSDQPAPSHNQ) are enriched in polar residues. One copy of the VERL 7 repeat lies at 991–1067 (VPITHEFGIN…PKSPVAPKPE (77 aa)). The interval 1062 to 1100 (VAPKPETGPTSNAPEPETYPTSSAPEKVSSDQPAPSHNQ) is disordered. A compositionally biased stretch (polar residues) spans 1069–1100 (GPTSNAPEPETYPTSSAPEKVSSDQPAPSHNQ). The VERL 8 repeat unit spans residues 1144 to 1220 (VPITQEFGIN…PKSPVAPKPE (77 aa)). A disordered region spans residues 1215–1253 (VAPKPETGPTSNAPEPETYPTSSAPEKVSSDQPAPSHNQ). Positions 1222 to 1253 (GPTSNAPEPETYPTSSAPEKVSSDQPAPSHNQ) are enriched in polar residues. The VERL 9 repeat unit spans residues 1297–1373 (VPITHKFGIN…PKSPVAHKPE (77 aa)). Residues 1368–1406 (VAHKPETGPTSNAPEPETYPTSSAPEKVSSDQPAPSHNQ) are disordered. Over residues 1375–1406 (GPTSNAPEPETYPTSSAPEKVSSDQPAPSHNQ) the composition is skewed to polar residues. One copy of the VERL 10 repeat lies at 1449–1525 (VPITHEFGIN…PKSPVAPKPE (77 aa)). The segment at 1519–1556 (PVAPKPETGPSSNAPEPETYPTSSAPEKVYSDQPAPSH) is disordered. Residues 1527-1543 (GPSSNAPEPETYPTSSA) are compositionally biased toward polar residues. N-linked (GlcNAc...) asparagine glycosylation is found at Asn-1557, Asn-1571, Asn-1596, Asn-1640, Asn-1661, Asn-1710, Asn-1724, Asn-1749, Asn-1793, Asn-1814, Asn-1863, Asn-1877, Asn-1902, Asn-1946, Asn-1967, Asn-2016, Asn-2030, Asn-2055, Asn-2099, Asn-2120, Asn-2169, Asn-2183, Asn-2208, Asn-2252, Asn-2273, Asn-2322, Asn-2336, Asn-2361, Asn-2405, Asn-2426, Asn-2475, Asn-2489, Asn-2514, Asn-2558, Asn-2579, Asn-2628, Asn-2642, Asn-2667, Asn-2711, Asn-2732, Asn-2781, Asn-2795, Asn-2820, Asn-2864, Asn-2885, Asn-2934, Asn-2948, Asn-2973, Asn-3017, Asn-3038, Asn-3087, Asn-3101, Asn-3126, Asn-3170, Asn-3191, Asn-3229, Asn-3243, Asn-3268, Asn-3312, and Asn-3333. A VERL 11 repeat occupies 1602–1678 (VPITHEFGIN…PKSPVAPKPE (77 aa)). The segment at 1672 to 1711 (PVAPKPETGPTSNAPEPQTYPTSSAPEKVSSDQPAPSHNQ) is disordered. Residues 1680–1711 (GPTSNAPEPQTYPTSSAPEKVSSDQPAPSHNQ) are compositionally biased toward polar residues. The VERL 12 repeat unit spans residues 1755 to 1831 (VPITQEFGIN…PKSPVAPKPE (77 aa)). The disordered stretch occupies residues 1826 to 1864 (VAPKPETGPTSNAPEPETYPTSSAPEKVSSDQPAPSHNQ). Residues 1833–1864 (GPTSNAPEPETYPTSSAPEKVSSDQPAPSHNQ) are compositionally biased toward polar residues. Residues 1908–1984 (VPITHEFGIN…PKSPVAPKPE (77 aa)) form a VERL 13 repeat. A disordered region spans residues 1979 to 2017 (VAPKPETGPTSNAPEPETYPTSSAPEKVSSDQPAPSHNQ). Residues 1986–2017 (GPTSNAPEPETYPTSSAPEKVSSDQPAPSHNQ) are compositionally biased toward polar residues. Residues 2061–2137 (VPITQEFGIN…PKSPVAPKPE (77 aa)) form a VERL 14 repeat. The disordered stretch occupies residues 2132 to 2170 (VAPKPETGPTSNAPEPETYPTSSAPEKVSSDQPAPSHNQ). The segment covering 2139 to 2170 (GPTSNAPEPETYPTSSAPEKVSSDQPAPSHNQ) has biased composition (polar residues). Residues 2214-2290 (VPITQEFGIN…PKSPVAPKPE (77 aa)) form a VERL 15 repeat. Residues 2285 to 2323 (VAPKPETGPTSNAPEPETYPTSSAPEKVSSDQPAPSHNQ) form a disordered region. The segment covering 2292 to 2323 (GPTSNAPEPETYPTSSAPEKVSSDQPAPSHNQ) has biased composition (polar residues). Residues 2367-2443 (VPITQEFGIN…PKSPVAPKPE (77 aa)) form a VERL 16 repeat. The interval 2438-2476 (VAPKPETGPTSNAPEPETYPTSSAPEKVSSDQPAPSHNQ) is disordered. Residues 2445–2476 (GPTSNAPEPETYPTSSAPEKVSSDQPAPSHNQ) show a composition bias toward polar residues. The VERL 17 repeat unit spans residues 2520–2596 (VPITQEFGIN…PKSPVAPKPE (77 aa)). The interval 2590 to 2629 (PVAPKPETGPTSNAPEPQTYPTSSAPEKVSSDQPAPSHNQ) is disordered. Polar residues predominate over residues 2598–2629 (GPTSNAPEPQTYPTSSAPEKVSSDQPAPSHNQ). Residues 2673-2749 (VPITQEFGIN…PKSPVAPKPE (77 aa)) form a VERL 18 repeat. The segment at 2744–2782 (VAPKPETGPTSNAPEPETYPTSSAPEKVSSDQPAPSHNQ) is disordered. The segment covering 2751–2782 (GPTSNAPEPETYPTSSAPEKVSSDQPAPSHNQ) has biased composition (polar residues). A VERL 19 repeat occupies 2826 to 2902 (VPITHEFGIN…PKSPVAPKPE (77 aa)). Residues 2897–2935 (VAPKPETGPTSNAPEPQTYPTSSAPEKVSSDQPAPSHNQ) form a disordered region. Residues 2904-2935 (GPTSNAPEPQTYPTSSAPEKVSSDQPAPSHNQ) are compositionally biased toward polar residues. A VERL 20 repeat occupies 2979–3055 (VPITQEFGIN…PKSPVAPKPE (77 aa)). The interval 3050-3088 (VAPKPETGPTSNAPEPETYPTSSAPEKVSSDQPAPSHNQ) is disordered. A compositionally biased stretch (polar residues) spans 3057–3088 (GPTSNAPEPETYPTSSAPEKVSSDQPAPSHNQ). Residues 3132–3208 (VPITQEFGIN…PKSPVAPKPE (77 aa)) form a VERL 21 repeat. Residues 3205–3230 (PKPETYPTSSAPEKVSSDQPAPSHNQ) form a disordered region. Residues 3210–3230 (YPTSSAPEKVSSDQPAPSHNQ) are compositionally biased toward polar residues. The VERL 22 repeat unit spans residues 3274-3351 (VPITHEFGIN…KSPVAPKPEA (78 aa)). Residues 3345–3407 (VAPKPEASPT…RKSNQTTSTE (63 aa)) form a disordered region. A compositionally biased stretch (polar residues) spans 3352 to 3375 (SPTSNAPEPQTYPTSSAPGTSPEG). 6 N-linked (GlcNAc...) asparagine glycosylation sites follow: Asn-3388, Asn-3401, Asn-3449, Asn-3456, Asn-3559, and Asn-3650. A ZP domain is found at 3408-3670 (DVLDDTSNYI…SSCSNQRRTR (263 aa)). Residues 3699 to 3719 (VALLVAVALLITQLAGLAIYV) traverse the membrane as a helical segment. At 3720–3722 (NIN) the chain is on the cytoplasmic side.

May form disulfide-linked homodimers. Interacts (via VERL repeats) with sperm lysin. Each VERL chain can bind numerous lysin molecules. N-glycosylated. About half of the glycoprotein mass corresponds to carbohydrate chains. N-glycosylation is not required for lysin binding. In terms of processing, O-glycosylated. O-glycosylation is not required for lysin binding.

It is found in the cell membrane. It localises to the secreted. The protein localises to the extracellular space. The protein resides in the extracellular matrix. Functionally, structural component of the egg vitelline envelope; forms long filaments. Functions as a species-specific receptor for the sperm protein lysin; prevents fertilization by sperm from other species. Each VERL chain can bind multiple copies of the sperm protein lysin; this creates a 3 um hole in the egg vitelline envelope through which the sperm passes. This Haliotis rufescens (California red abalone) protein is Vitelline envelope sperm lysin receptor.